The chain runs to 418 residues: FXa-directed anticoagulant (418 aa).

Residues 1–19 (MNLKIAIIVICQLVYFTQG) form the signal peptide. Residues N117, N167, and N286 are each glycosylated (N-linked (GlcNAc...) asparagine).

It belongs to the serpin family. In terms of assembly, interacts with host coagulation factor X/F10 (activated). Female salivary gland (at protein level).

It localises to the secreted. In terms of biological role, anticoagulant and antithrombotic serpin-type protein inhibiting host coagulation factor Xa (F10). Does not inhibit host uPA/urokinase-type plasminogen activator (PLAU), kallikrein, granzyme B (GZMB), matriptase, elastase, alpha-chymotrypsin, chymase, coagulation factor XIIa (F12), coagulation factor XIa (F11), plasmin (PLG), thrombin (F2), trypsin and cathepsin G (CTSG). Inhibits factor Xa-induced production of pro-inflammatory cytokines, such as MCP-1/CCL2, TNF-alpha/TNF, IL-1beta/IL1B, IL6, IL8/CXCL8 and IL18, in human endothelial cells. Inhibits factor Xa-induced up-regulation of protease-activated receptors (PARs) F2R, F2RL1 and F2RL2 in human endothelial cells. Prevents activation of host F2RL1 via inhibition of F2RL1 cleavage by host factor Xa. Inhibits factor Xa-induced up-regulation of adhesion molecules ICAM1 and VCAM1 in human endothelial cells. Inhibits factor Xa-induced up-regulation of phosphorylated ERK1/2 in human endothelial cells. Inhibits factor Xa-induced activation of transcription factor NF-kappa-B in human endothelial cells. Reduces factor Xa-induced edema in the host. Reduces factor Xa-induced endothelial permeability in the host. The sequence is that of FXa-directed anticoagulant from Aedes albopictus (Asian tiger mosquito).